The chain runs to 667 residues: MYGMLYESVQHYVQEEYGVDIWRKVCHIIDCKHNSFKTHQIYPDKLMPDIAEALSACTGESFDFCMNFFGRCFVRFFSNFGYDKMIRSTGRYFCDFLQSIDNIHLIMRFTYPKMKSPSMQLTNMDDNGAVILYRSSRTGMSKYLIGQMTEVAREFYGLEIKAYVIESQNDISGGTAGPIKLTDGPLTVIVKYRLDFDNREYMAKRVNTEAHPSQLKMPTVKLDVFLDLFPFTFVLNHDMKITHAGEKIVETWIMHNPGANPKSFIGTHVMDLFQCRRPKDTTIDWDTLIQMRAVLFEFELIRTGHNRAAYDAVLNMDFENYDEMDLNEAQTMALAKAQEFSESHPVDDDESAREDEIDPATGERRSSQGLRSILLKGQMFYIKDVDSLIFLCSPLIENLDELHGIGLYLNDLNPHGLSRELVMAGWQHCSKLEIMFEKEEQRSDELEKSLELADSWKRQGDELLYSMIPRPIAERMRLSEEQVCQSFEEVSVIFLEVMNVYDEGLNSIQGAMQTVNTLNKVFSALDEEIISPFVYKVETVGMVYMAVSGAPDVNPLHAEHACDLALRVMKKFKAHDMGDVAIRVGINSGPVVAGVVGQKVPRYCLFGDTVNTASRMESSSDPWKIQLSKYTGDKVRQVGYKVESRGTVQVKGKGDMETYWLLEGPEG.

A heme-binding site is contributed by H104. The segment at 337-364 (AQEFSESHPVDDDESAREDEIDPATGER) is disordered. Positions 347–358 (DDDESAREDEID) are enriched in acidic residues. Positions 427 to 455 (QHCSKLEIMFEKEEQRSDELEKSLELADS) form a coiled coil. The Guanylate cyclase domain maps to 491-617 (SVIFLEVMNV…DTVNTASRME (127 aa)).

Belongs to the adenylyl cyclase class-4/guanylyl cyclase family. As to quaternary structure, heterodimer; with Gyc88E, in the presence of magnesium or manganese. Heme is required as a cofactor.

It localises to the cytoplasm. It carries out the reaction GTP = 3',5'-cyclic GMP + diphosphate. With respect to regulation, probably not activated by nitric oxide (NO). Heterodimer also exhibits some stimulation, some compounds (SIN-1 and two of the NONOates) that were ineffective at stimulating Gyc-88E alone did stimulate the heterodimer. Its function is as follows. Heterodimers with Gyc-89Da and Gyc-89Db are activated in response to changing oxygen concentrations, alerting flies to hypoxic environments. Under normal oxygen concentrations, oxygen binds to the heme group and results in low levels of guanylyl cyclase activity. When exposed to reduced oxygen concentrations, the oxygen dissociates from the heme group resulting in activation of the enzyme. This chain is Soluble guanylate cyclase 89Da, found in Drosophila melanogaster (Fruit fly).